A 229-amino-acid chain; its full sequence is Aminodeoxyfutalosine nucleosidase (229 aa).

The active-site Proton acceptor is E13. Residues G79, I153, and 173 to 174 (ME) contribute to the substrate site. D197 serves as the catalytic Proton donor.

This sequence belongs to the PNP/UDP phosphorylase family. Homodimer.

The enzyme catalyses 6-amino-6-deoxyfutalosine + H2O = dehypoxanthine futalosine + adenine. It carries out the reaction S-adenosyl-L-homocysteine + H2O = S-(5-deoxy-D-ribos-5-yl)-L-homocysteine + adenine. It catalyses the reaction S-methyl-5'-thioadenosine + H2O = 5-(methylsulfanyl)-D-ribose + adenine. The catalysed reaction is 5'-deoxyadenosine + H2O = 5-deoxy-D-ribose + adenine. It participates in quinol/quinone metabolism; menaquinone biosynthesis. It functions in the pathway amino-acid biosynthesis; L-methionine biosynthesis via salvage pathway; S-methyl-5-thio-alpha-D-ribose 1-phosphate from S-methyl-5'-thioadenosine (hydrolase route): step 1/2. Functionally, catalyzes the direct conversion of aminodeoxyfutalosine (AFL) into dehypoxanthine futalosine (DHFL) and adenine via the hydrolysis of the N-glycosidic bond; this reaction seems to represent an essential step in the menaquinone biosynthesis pathway in Campylobacter species. Also catalyzes the hydrolysis of 5'-methylthioadenosine (MTA) to adenine and 5'-methylthioribose. Can also probably use S-adenosylhomocysteine (SAH) as substrate, leading to adenine and S-ribosylhomocysteine. These other activities highlight the tremendous versatility of the enzyme, which also plays key roles in S-adenosylmethionine recycling and in the biosynthesis of the quorum-sensing molecule autoinducer-2. Shows negligible activity with futalosine (FL) as substrate. The protein is Aminodeoxyfutalosine nucleosidase (pfs) of Campylobacter jejuni subsp. jejuni serotype O:2 (strain ATCC 700819 / NCTC 11168).